Reading from the N-terminus, the 555-residue chain is Vacuolar fusion protein MON1 homolog A (555 aa).

Residues 1 to 12 (MAADMQRKRSSE) show a composition bias toward basic and acidic residues. Positions 1–90 (MAADMQRKRS…PPLATDMRQI (90 aa)) are disordered. Phosphoserine occurs at positions 31 and 56. A Phosphothreonine modification is found at Thr61. The residue at position 91 (Ser91) is a Phosphoserine. The tract at residues 112 to 149 (MLPGSSEDWPESPGAARRPATEPPRDGAGEGDEEEAAE) is disordered. Over residues 130–139 (PATEPPRDGA) the composition is skewed to basic and acidic residues.

It belongs to the MON1/SAND family. Interacts with CCZ1. Found in a complex with RMC1, CCZ1, MON1A and MON1B. The MON1A-CCZ1B complex interacts with RIMOC1. The MON1A-CCZ1B complex interacts with RAB7A and this interaction is enhanced in the presence of RIMOC1.

Its function is as follows. Plays an important role in membrane trafficking through the secretory apparatus. Not involved in endocytic trafficking to lysosomes. Acts in concert with CCZ1, as a guanine exchange factor (GEF) for RAB7, promotes the exchange of GDP to GTP, converting it from an inactive GDP-bound form into an active GTP-bound form. The polypeptide is Vacuolar fusion protein MON1 homolog A (MON1A) (Bos taurus (Bovine)).